A 252-amino-acid chain; its full sequence is Diphthine synthase (252 aa).

Residues L9, D85, V88, 113–114, L165, A204, and H229 contribute to the S-adenosyl-L-methionine site; that span reads SI.

It belongs to the diphthine synthase family. As to quaternary structure, homodimer.

The catalysed reaction is 2-[(3S)-amino-3-carboxypropyl]-L-histidyl-[translation elongation factor 2] + 3 S-adenosyl-L-methionine = diphthine-[translation elongation factor 2] + 3 S-adenosyl-L-homocysteine + 3 H(+). Its pathway is protein modification; peptidyl-diphthamide biosynthesis. In terms of biological role, S-adenosyl-L-methionine-dependent methyltransferase that catalyzes the trimethylation of the amino group of the modified target histidine residue in translation elongation factor 2 (EF-2), to form an intermediate called diphthine. The three successive methylation reactions represent the second step of diphthamide biosynthesis. The sequence is that of Diphthine synthase from Methanocorpusculum labreanum (strain ATCC 43576 / DSM 4855 / Z).